The chain runs to 303 residues: Putative S-adenosyl-L-methionine-dependent methyltransferase MAB_0213c (303 aa).

S-adenosyl-L-methionine contacts are provided by residues Asp-126 and Asp-155–Leu-156.

Belongs to the UPF0677 family.

Functionally, exhibits S-adenosyl-L-methionine-dependent methyltransferase activity. The chain is Putative S-adenosyl-L-methionine-dependent methyltransferase MAB_0213c from Mycobacteroides abscessus (strain ATCC 19977 / DSM 44196 / CCUG 20993 / CIP 104536 / JCM 13569 / NCTC 13031 / TMC 1543 / L948) (Mycobacterium abscessus).